Consider the following 851-residue polypeptide: DNA mismatch repair protein MutS (851 aa).

ATP is bound at residue 614-621 (GPNMGGKS).

The protein belongs to the DNA mismatch repair MutS family.

This protein is involved in the repair of mismatches in DNA. It is possible that it carries out the mismatch recognition step. This protein has a weak ATPase activity. This is DNA mismatch repair protein MutS from Yersinia pseudotuberculosis serotype O:1b (strain IP 31758).